A 483-amino-acid chain; its full sequence is MARAIMFQGTGSDVGKSVLVAGLCRVARNRGLKVRPFKPQNMSNNAAVSDDGGEIGRAQWLQALACGVPSSVHMNPVLLKPQTDMGSQLIVQGQVRGEARGRYYQELKPQLMAAVMESFAKVGDGADLVLVEGAGSPAEINLRAGDIANMGFATHADVPVVLVGDIDRGGVIASLVGTHTILPQEDRAMVRGFLINKFRGDISLFDDSLAAITRFTGWRSFGVVPWLKAVSRLPAEDSVVLERAVRGDKKALIVAVPMLPRIANFDDLDPLKAEPAVEVVMVPPGSSLPADAGLVVLPGTKSTIADLLALRENGWDRELVAHVKRGGHVLGICGGFQMLGRRISDPAGIEGNVRDIEGLGLLDIETMTEPEKVVRNVEAVSLLHDEPLEGYEIHIGRTSGPDMARPFARIGDHDDGAVSPDGRIMGTYLHGVFSADRFRHHFLRALGVEGGQMNYRESVEEALGELAEGLEASLDIDGLFALA.

The GATase cobBQ-type domain occupies 251 to 438 (ALIVAVPMLP…LHGVFSADRF (188 aa)). The active-site Nucleophile is the cysteine 333. Histidine 430 is an active-site residue.

The protein belongs to the CobB/CobQ family. CobQ subfamily.

It functions in the pathway cofactor biosynthesis; adenosylcobalamin biosynthesis. Functionally, catalyzes amidations at positions B, D, E, and G on adenosylcobyrinic A,C-diamide. NH(2) groups are provided by glutamine, and one molecule of ATP is hydrogenolyzed for each amidation. The polypeptide is Cobyric acid synthase (Brucella melitensis biotype 2 (strain ATCC 23457)).